We begin with the raw amino-acid sequence, 436 residues long: T-box transcription factor T (436 aa).

The segment at residues 51-219 (LWLRFKELTN…YNPFAKAFLD (169 aa)) is a DNA-binding region (T-box).

As to quaternary structure, monomer. Binds DNA as a monomer.

The protein resides in the nucleus. In terms of biological role, involved in the transcriptional regulation of genes required for mesoderm formation and differentiation. Binds to a palindromic T site 5'-TTCACACCTAGGTGTGAA-3' DNA sequence and activates gene transcription when bound to such a site. The protein is T-box transcription factor T of Mus musculus (Mouse).